A 200-amino-acid chain; its full sequence is Small ribosomal subunit protein uS4 (200 aa).

Positions 1-43 (MARYTGPRGRRDRRAGVMLSSMRKNPLEKKPYPPGEHGRDRQR) are disordered. The segment covering 25–43 (NPLEKKPYPPGEHGRDRQR) has biased composition (basic and acidic residues). An S4 RNA-binding domain is found at 92 to 158 (LRMDNVVYRM…QPIQEAVEQV (67 aa)).

It belongs to the universal ribosomal protein uS4 family. As to quaternary structure, part of the 30S ribosomal subunit. Contacts protein S5. The interaction surface between S4 and S5 is involved in control of translational fidelity.

In terms of biological role, one of the primary rRNA binding proteins, it binds directly to 16S rRNA where it nucleates assembly of the body of the 30S subunit. Its function is as follows. With S5 and S12 plays an important role in translational accuracy. This Rubrobacter xylanophilus (strain DSM 9941 / JCM 11954 / NBRC 16129 / PRD-1) protein is Small ribosomal subunit protein uS4.